The sequence spans 558 residues: Membrane protein insertase YidC (558 aa).

A run of 5 helical transmembrane segments spans residues Ile3 to Trp23, Phe364 to Phe384, Leu438 to Val458, Pro477 to Pro497, and Met508 to Leu528.

This sequence belongs to the OXA1/ALB3/YidC family. Type 1 subfamily. As to quaternary structure, interacts with the Sec translocase complex via SecD. Specifically interacts with transmembrane segments of nascent integral membrane proteins during membrane integration.

It localises to the cell inner membrane. Its function is as follows. Required for the insertion and/or proper folding and/or complex formation of integral membrane proteins into the membrane. Involved in integration of membrane proteins that insert both dependently and independently of the Sec translocase complex, as well as at least some lipoproteins. Aids folding of multispanning membrane proteins. This Burkholderia pseudomallei (strain 668) protein is Membrane protein insertase YidC.